Consider the following 608-residue polypeptide: UvrABC system protein C (608 aa).

The GIY-YIG domain occupies His15 to Val93. Residues Arg203–Val238 form the UVR domain.

This sequence belongs to the UvrC family. In terms of assembly, interacts with UvrB in an incision complex.

It is found in the cytoplasm. In terms of biological role, the UvrABC repair system catalyzes the recognition and processing of DNA lesions. UvrC both incises the 5' and 3' sides of the lesion. The N-terminal half is responsible for the 3' incision and the C-terminal half is responsible for the 5' incision. The chain is UvrABC system protein C from Aliivibrio salmonicida (strain LFI1238) (Vibrio salmonicida (strain LFI1238)).